A 145-amino-acid polypeptide reads, in one-letter code: Large ribosomal subunit protein uL11 (145 aa).

It belongs to the universal ribosomal protein uL11 family. Part of the ribosomal stalk of the 50S ribosomal subunit. Interacts with L10 and the large rRNA to form the base of the stalk. L10 forms an elongated spine to which L12 dimers bind in a sequential fashion forming a multimeric L10(L12)X complex. In terms of processing, one or more lysine residues are methylated.

Functionally, forms part of the ribosomal stalk which helps the ribosome interact with GTP-bound translation factors. The chain is Large ribosomal subunit protein uL11 from Coxiella burnetii (strain Dugway 5J108-111).